A 138-amino-acid polypeptide reads, in one-letter code: Basic phospholipase A2 PL-Y (138 aa).

The N-terminal stretch at 1 to 16 (MRTLWIMAVLLVGVEG) is a signal peptide. Intrachain disulfides connect C42-C131, C44-C60, C59-C111, C65-C138, C66-C104, C73-C97, and C91-C102. Ca(2+) is bound by residues Y43, G45, and G47. H63 is an active-site residue. D64 serves as a coordination point for Ca(2+). D105 is an active-site residue.

The protein belongs to the phospholipase A2 family. Group II subfamily. D49 sub-subfamily. The cofactor is Ca(2+). Expressed by the venom gland.

The protein localises to the secreted. The catalysed reaction is a 1,2-diacyl-sn-glycero-3-phosphocholine + H2O = a 1-acyl-sn-glycero-3-phosphocholine + a fatty acid + H(+). In terms of biological role, snake venom phospholipase A2 (PLA2) that can cleave arachidonate at the sn-2 position from phospholipides in the micellar state or in bilayer membranes. PLA2 catalyzes the calcium-dependent hydrolysis of the 2-acyl groups in 3-sn-phosphoglycerides. The polypeptide is Basic phospholipase A2 PL-Y (Protobothrops flavoviridis (Habu)).